The sequence spans 376 residues: Cysteine synthase 1 (376 aa).

Residues 1-16 (MFRHGVRTFATTSLRR) constitute a mitochondrion transit peptide. Lys79 is modified (N6-(pyridoxal phosphate)lysine). Pyridoxal 5'-phosphate is bound by residues Asn109, 215-219 (GTGGT), and Ser314.

The protein belongs to the cysteine synthase/cystathionine beta-synthase family. Pyridoxal 5'-phosphate serves as cofactor.

The protein resides in the mitochondrion. It carries out the reaction O-succinyl-L-serine + hydrogen sulfide = L-cysteine + succinate. The catalysed reaction is O-acetyl-L-serine + hydrogen sulfide = L-cysteine + acetate. The protein operates within amino-acid biosynthesis; L-cysteine biosynthesis; L-cysteine from L-serine: step 2/2. Its function is as follows. Catalyzes the conversion of O-succinyl-L-serine into cysteine, the last step in the cysteine biosynthesis pathway. Can also use O-acetyl-L-serine. The sequence is that of Cysteine synthase 1 (cys-17) from Neurospora crassa (strain ATCC 24698 / 74-OR23-1A / CBS 708.71 / DSM 1257 / FGSC 987).